Here is a 311-residue protein sequence, read N- to C-terminus: Olfactory receptor 2Y1 (311 aa).

Over 1-25 (MGSFNTSFEDGFILVGFSDWPQLEP) the chain is Extracellular. Residue asparagine 5 is glycosylated (N-linked (GlcNAc...) asparagine). Residues 26–49 (ILFVFIFIFYSLTLFGNTIIIALS) form a helical membrane-spanning segment. The Cytoplasmic segment spans residues 50-57 (WLDLRLHT). Residues 58 to 79 (PMYFFLSHLSLLDLCFTTSTVP) form a helical membrane-spanning segment. At 80–100 (QLLINLCGVDRTITRGGCVAQ) the chain is on the extracellular side. A disulfide bridge links cysteine 97 with cysteine 188. Residues 101–120 (LFIYLALGSTECVLLVVMAF) traverse the membrane as a helical segment. Residues 121 to 139 (DRYAAVCRPLHYMAIMHPH) lie on the Cytoplasmic side of the membrane. The helical transmembrane segment at 140 to 158 (LCQTLAIASWGAGFVNSLI) threads the bilayer. Residues 159 to 194 (QTGLAMAMPLCGHRLNHFFCEMPVFLKLACADTEGT) lie on the Extracellular side of the membrane. The chain crosses the membrane as a helical span at residues 195-218 (EAKMFVARVIVVAVPAALILGSYV). Residues 219 to 235 (HIAHAVLRVKSTAGRRK) lie on the Cytoplasmic side of the membrane. A helical membrane pass occupies residues 236 to 258 (AFGTCGSHLLVVFLFYGSAIYTY). Over 259–271 (LQSIHNYSEREGK) the chain is Extracellular. Residue asparagine 264 is glycosylated (N-linked (GlcNAc...) asparagine). The helical transmembrane segment at 272–291 (FVALFYTIITPILNPLIYTL) threads the bilayer. At 292 to 311 (RNKDVKGALWKVLWRGRDSG) the chain is on the cytoplasmic side.

It belongs to the G-protein coupled receptor 1 family.

The protein resides in the cell membrane. Its function is as follows. Odorant receptor. The sequence is that of Olfactory receptor 2Y1 (OR2Y1) from Homo sapiens (Human).